A 212-amino-acid polypeptide reads, in one-letter code: Fe/S biogenesis protein NfuA (212 aa).

Residues C169 and C172 each contribute to the [4Fe-4S] cluster site.

The protein belongs to the NfuA family. As to quaternary structure, homodimer. The cofactor is [4Fe-4S] cluster.

Involved in iron-sulfur cluster biogenesis. Binds a 4Fe-4S cluster, can transfer this cluster to apoproteins, and thereby intervenes in the maturation of Fe/S proteins. Could also act as a scaffold/chaperone for damaged Fe/S proteins. The protein is Fe/S biogenesis protein NfuA of Acinetobacter baumannii (strain AB307-0294).